A 352-amino-acid polypeptide reads, in one-letter code: Aspartic protease Bla g 2 (352 aa).

Positions Met-1–Ala-19 are cleaved as a signal peptide. Positions Ala-20–Arg-24 are cleaved as a propeptide — removed in mature form. Positions Tyr-39–Gly-346 constitute a Peptidase A1 domain. Asp-55 is an active-site residue. Cystine bridges form between Cys-59/Cys-151, Cys-68/Cys-73, and Cys-75/Cys-136. Residue Asn-117 is glycosylated (N-linked (GlcNAc...) asparagine). His-178 and His-186 together coordinate Zn(2+). The active site involves Asp-239. 2 cysteine pairs are disulfide-bonded: Cys-261–Cys-272 and Cys-276–Cys-309. N-linked (GlcNAc...) asparagine glycosylation is present at Asn-295. Zn(2+) is bound by residues Asp-326 and Asp-330. A glycan (N-linked (GlcNAc...) asparagine) is linked at Asn-340.

It belongs to the peptidase A1 family. Homodimer.

Its function is as follows. Functions as a digestive enzyme in the cockroach. The sequence is that of Aspartic protease Bla g 2 from Blattella germanica (German cockroach).